The chain runs to 447 residues: UPF0210 protein lp_2507 (447 aa).

This sequence belongs to the UPF0210 family. As to quaternary structure, homodimer.

The protein is UPF0210 protein lp_2507 of Lactiplantibacillus plantarum (strain ATCC BAA-793 / NCIMB 8826 / WCFS1) (Lactobacillus plantarum).